The primary structure comprises 126 residues: MARLSGVDLPREKRVEIALTYIFGIGRSRSRDTLAATAVNPDTRVRDLSEEEIVRLRDWIDANYRVEGDLNREIKQDIRRKMEIGCYQGLRHRRNLPVHGQRTHTNARTRKGPRRAIAGKKKAGKK.

Positions 95–126 are disordered; it reads NLPVHGQRTHTNARTRKGPRRAIAGKKKAGKK.

Belongs to the universal ribosomal protein uS13 family. In terms of assembly, part of the 30S ribosomal subunit. Forms a loose heterodimer with protein S19. Forms two bridges to the 50S subunit in the 70S ribosome.

Its function is as follows. Located at the top of the head of the 30S subunit, it contacts several helices of the 16S rRNA. In the 70S ribosome it contacts the 23S rRNA (bridge B1a) and protein L5 of the 50S subunit (bridge B1b), connecting the 2 subunits; these bridges are implicated in subunit movement. Contacts the tRNAs in the A and P-sites. In Frankia casuarinae (strain DSM 45818 / CECT 9043 / HFP020203 / CcI3), this protein is Small ribosomal subunit protein uS13.